The chain runs to 278 residues: Energy-coupling factor transporter ATP-binding protein EcfA1 (278 aa).

One can recognise an ABC transporter domain in the interval 5 to 240 (IEVRNLKYKY…EDLEELGLDQ (236 aa)). ATP is bound at residue 40-47 (GHNGSGKS).

Belongs to the ABC transporter superfamily. Energy-coupling factor EcfA family. As to quaternary structure, forms a stable energy-coupling factor (ECF) transporter complex composed of 2 membrane-embedded substrate-binding proteins (S component), 2 ATP-binding proteins (A component) and 2 transmembrane proteins (T component).

Its subcellular location is the cell membrane. ATP-binding (A) component of a common energy-coupling factor (ECF) ABC-transporter complex. Unlike classic ABC transporters this ECF transporter provides the energy necessary to transport a number of different substrates. This chain is Energy-coupling factor transporter ATP-binding protein EcfA1, found in Streptococcus sanguinis (strain SK36).